The chain runs to 101 residues: Small ribosomal subunit protein uS14 (101 aa).

Belongs to the universal ribosomal protein uS14 family. As to quaternary structure, part of the 30S ribosomal subunit. Contacts proteins S3 and S10.

Its function is as follows. Binds 16S rRNA, required for the assembly of 30S particles and may also be responsible for determining the conformation of the 16S rRNA at the A site. The sequence is that of Small ribosomal subunit protein uS14 from Roseobacter denitrificans (strain ATCC 33942 / OCh 114) (Erythrobacter sp. (strain OCh 114)).